A 265-amino-acid chain; its full sequence is Orotidine 5'-phosphate decarboxylase (265 aa).

Residues Asp38, 60–62 (KTH), 92–101 (DRKFADIGKT), Tyr218, and Arg236 each bind substrate. The Proton donor role is filled by Lys94.

It belongs to the OMP decarboxylase family.

It carries out the reaction orotidine 5'-phosphate + H(+) = UMP + CO2. The protein operates within pyrimidine metabolism; UMP biosynthesis via de novo pathway; UMP from orotate: step 2/2. This Cyberlindnera fabianii (Yeast) protein is Orotidine 5'-phosphate decarboxylase (URA3).